Consider the following 131-residue polypeptide: Glycine cleavage system H protein (131 aa).

The 83-residue stretch at 24-106 (RAIVGISDHA…YGEGWIMVIE (83 aa)) folds into the Lipoyl-binding domain. Lys-65 is subject to N6-lipoyllysine.

This sequence belongs to the GcvH family. In terms of assembly, the glycine cleavage system is composed of four proteins: P, T, L and H. Requires (R)-lipoate as cofactor.

Its function is as follows. The glycine cleavage system catalyzes the degradation of glycine. The H protein shuttles the methylamine group of glycine from the P protein to the T protein. This Xylella fastidiosa (strain M12) protein is Glycine cleavage system H protein.